A 362-amino-acid chain; its full sequence is Tyrosine-protein kinase SRK2 (362 aa).

Residues 1-70 enclose the SH2 domain; sequence TFLVRESESK…GLCVNLRQPC (70 aa). The Protein kinase domain maps to 95–348; sequence ITLIRKLGAG…ALQWRLEDFF (254 aa). ATP-binding positions include 101–109 and K123; that span reads LGAGQFGEV. The Proton acceptor role is filled by D214.

Belongs to the protein kinase superfamily. Tyr protein kinase family.

It is found in the cytoplasm. It catalyses the reaction L-tyrosyl-[protein] + ATP = O-phospho-L-tyrosyl-[protein] + ADP + H(+). This Spongilla lacustris (Freshwater sponge) protein is Tyrosine-protein kinase SRK2 (SRK2).